The sequence spans 453 residues: Tubulin alpha chain (453 aa).

Gln-11 is a GTP binding site. Residue Lys-40 is modified to N6-acetyllysine. 6 residues coordinate GTP: Glu-71, Gly-144, Thr-145, Thr-179, Asn-206, and Asn-228. Glu-71 is a Mg(2+) binding site. Glu-254 is an active-site residue.

This sequence belongs to the tubulin family. As to quaternary structure, dimer of alpha and beta chains. A typical microtubule is a hollow water-filled tube with an outer diameter of 25 nm and an inner diameter of 15 nM. Alpha-beta heterodimers associate head-to-tail to form protofilaments running lengthwise along the microtubule wall with the beta-tubulin subunit facing the microtubule plus end conferring a structural polarity. Microtubules usually have 13 protofilaments but different protofilament numbers can be found in some organisms and specialized cells. It depends on Mg(2+) as a cofactor. Post-translationally, undergoes a tyrosination/detyrosination cycle, the cyclic removal and re-addition of a C-terminal tyrosine residue by the enzymes tubulin tyrosine carboxypeptidase (TTCP) and tubulin tyrosine ligase (TTL), respectively. Acetylation of alpha chains at Lys-40 stabilizes microtubules and affects affinity and processivity of microtubule motors. This modification has a role in multiple cellular functions, ranging from cell motility, cell cycle progression or cell differentiation to intracellular trafficking and signaling.

It localises to the cytoplasm. Its subcellular location is the cytoskeleton. The catalysed reaction is GTP + H2O = GDP + phosphate + H(+). Functionally, tubulin is the major constituent of microtubules, a cylinder consisting of laterally associated linear protofilaments composed of alpha- and beta-tubulin heterodimers. Microtubules grow by the addition of GTP-tubulin dimers to the microtubule end, where a stabilizing cap forms. Below the cap, tubulin dimers are in GDP-bound state, owing to GTPase activity of alpha-tubulin. This is Tubulin alpha chain (TUBA) from Neospora caninum (Coccidian parasite).